Here is a 398-residue protein sequence, read N- to C-terminus: Elongation factor Tu (398 aa).

The tr-type G domain occupies 10-207 (KPHVNIGTIG…TVDSYIPEPE (198 aa)). The tract at residues 19-26 (GHVDHGKT) is G1. 19–26 (GHVDHGKT) provides a ligand contact to GTP. Residue Thr26 participates in Mg(2+) binding. Residues 63–67 (GITIN) are G2. The G3 stretch occupies residues 84–87 (DAPG). GTP-binding positions include 84–88 (DAPGH) and 139–142 (NKVD). Positions 139 to 142 (NKVD) are G4. The segment at 177–179 (SAL) is G5.

Belongs to the TRAFAC class translation factor GTPase superfamily. Classic translation factor GTPase family. EF-Tu/EF-1A subfamily. As to quaternary structure, monomer.

It is found in the cytoplasm. It catalyses the reaction GTP + H2O = GDP + phosphate + H(+). GTP hydrolase that promotes the GTP-dependent binding of aminoacyl-tRNA to the A-site of ribosomes during protein biosynthesis. This chain is Elongation factor Tu, found in Streptococcus pyogenes serotype M1.